The sequence spans 242 residues: Probable 2-phosphosulfolactate phosphatase (242 aa).

It belongs to the ComB family. The cofactor is Mg(2+).

It catalyses the reaction (2R)-O-phospho-3-sulfolactate + H2O = (2R)-3-sulfolactate + phosphate. The polypeptide is Probable 2-phosphosulfolactate phosphatase (Synechococcus sp. (strain JA-2-3B'a(2-13)) (Cyanobacteria bacterium Yellowstone B-Prime)).